The chain runs to 429 residues: CinA-like protein (429 aa).

Belongs to the CinA family.

In Chlorobium limicola (strain DSM 245 / NBRC 103803 / 6330), this protein is CinA-like protein.